Reading from the N-terminus, the 914-residue chain is Protein ECT2 (914 aa).

Ala2 bears the N-acetylalanine mark. BRCT domains follow at residues 171–260 and 266–354; these read LYCT…AAVD and FKVP…MYLY. At Thr359 the chain carries Phosphothreonine; by PKC/PRKCI. Phosphoserine is present on residues Ser367 and Ser370. Thr373 carries the phosphothreonine; by CDK1 modification. Ser376 carries the post-translational modification Phosphoserine. Short sequence motifs (nuclear localization signal) lie at residues 378 to 382 and 401 to 405; these read RKRRR and PRKRP. Residues 388 to 449 form a disordered region; the sequence is AQLSRETDVS…SKSSTPVPSK (62 aa). Residues 418–429 are compositionally biased toward polar residues; it reads DISNTPESSINY. The span at 432–449 shows a compositional bias: low complexity; the sequence is TPKSCTKSSKSSTPVPSK. At Thr444 the chain carries Phosphothreonine; by CDK1. The DH domain occupies 452–641; sequence ARWQVAKELY…KEVMTHINED (190 aa). Lys611 is covalently cross-linked (Glycyl lysine isopeptide (Lys-Gly) (interchain with G-Cter in SUMO2)). A PH domain is found at 675 to 794; that stretch reads RVETISLGEH…KMLCRHVANT (120 aa). A phosphoserine mark is found at Ser716 and Ser842. Phosphothreonine; by CDK1 is present on Thr846. The segment at 857 to 884 is disordered; sequence TSHGSVEGRSPSSNDKHVMSRLSSTSSL. 2 positions are modified to phosphoserine: Ser861 and Ser866.

As to quaternary structure, homodimer. Homooligomer. Found in the centralspindlin complex. Interacts with NR1I3. Interacts (Thr-359 phosphorylated form) with PARD6A; the interaction is observed in cancer cells. Interacts (Thr-359 phosphorylated form) with PRKCI; the interaction is observed in cancer cells. Interacts with PKP4; the interaction is observed at the midbody. Interacts with RACGAP1/CYK4; the interaction is direct, occurs in a microtubule-dependent manner, occurs at anaphase and during cytokinesis, is inhibited in metaphase by phosphorylation of ECT2 on Thr-373 and is stimulated in early anaphase by dephosphorylation of ECT2 probably on Thr-373 through CDK1 activity. Interacts with PLK1; the interaction is stimulated upon its phosphorylation on Thr-444. Interacts with RHOA; the interaction results in allosteric activation of ECT2. Interacts with KIF23, PARD3, PARD6B and PRKCQ. Interacts with NEDD9/HEF1. In terms of processing, phosphorylated by PLK1 in vitro. Hyperphosphorylated during the G2 phase of the cell cycle. Phosphorylation at Thr-373 occurs during the G2/M phase, relieves its auto-inhibition status and stimulates its GEF activity. Phosphorylation at Thr-444 in G2/M phase is required for subsequent binding with PLK1 and Rho exchange activation. Dephosphorylated at the time of cytokinesis. Phosphorylation at Thr-359 is required for its transformation activity in cancer cells. In terms of tissue distribution, expressed in lung epithelial cells (at protein level). Expressed in squamous cell carcinoma, primary non-small cell lung cancer tumors and lung adenocarcinoma.

It is found in the nucleus. The protein localises to the cytoplasm. It localises to the cytoskeleton. The protein resides in the spindle. Its subcellular location is the cleavage furrow. It is found in the midbody. The protein localises to the cell junction. It localises to the tight junction. The protein resides in the microtubule organizing center. Its subcellular location is the centrosome. Autoinhibited by the C-terminal PH domain which folds back and binds to the surface of the DH domain, blocking binding of RHOA to the catalytic center of the DH domain. The 2nd BRCT domain is also involved in inhibition, probably by helping to impede RHOA binding. Allosterically activated by binding of activated GTP-bound RHOA to the PH domain which stimulates the release of PH inhibition and promotes the binding of substrate RHOA to the catalytic center. Binding of phosphorylated RACGAP1 to the N-terminal BRCT domain-containing region also releases autoinhibition. In terms of biological role, guanine nucleotide exchange factor (GEF) that catalyzes the exchange of GDP for GTP. Promotes guanine nucleotide exchange on the Rho family members of small GTPases, like RHOA, RHOC, RAC1 and CDC42. Required for signal transduction pathways involved in the regulation of cytokinesis. Component of the centralspindlin complex that serves as a microtubule-dependent and Rho-mediated signaling required for the myosin contractile ring formation during the cell cycle cytokinesis. Regulates the translocation of RHOA from the central spindle to the equatorial region. Plays a role in the control of mitotic spindle assembly; regulates the activation of CDC42 in metaphase for the process of spindle fibers attachment to kinetochores before chromosome congression. Involved in the regulation of epithelial cell polarity; participates in the formation of epithelial tight junctions in a polarity complex PARD3-PARD6-protein kinase PRKCQ-dependent manner. Plays a role in the regulation of neurite outgrowth. Inhibits phenobarbital (PB)-induced NR1I3 nuclear translocation. Stimulates the activity of RAC1 through its association with the oncogenic PARD6A-PRKCI complex in cancer cells, thereby acting to coordinately drive tumor cell proliferation and invasion. Also stimulates genotoxic stress-induced RHOB activity in breast cancer cells leading to their cell death. The protein is Protein ECT2 of Homo sapiens (Human).